We begin with the raw amino-acid sequence, 203 residues long: SOSS complex subunit B1 (203 aa).

Residues 22–92 (IVLETGRVTK…TLYTGRGGDL (71 aa)) constitute a DNA-binding region (OB). Positions 111–203 (PNPEYIAQQS…GKEPRRTGKR (93 aa)) are disordered. Residues 117–128 (AQQSQNKQAQAE) are compositionally biased toward polar residues. Residues 129-140 (SGTGTNSHNSSS) show a composition bias toward low complexity. A compositionally biased stretch (polar residues) spans 149 to 182 (ENGNGSNSSGPPTHQSTAPTHSTSGRITRSQPNH).

It belongs to the SOSS-B family. SOSS-B1 subfamily. As to quaternary structure, component of the SOSS complex, composed of soss-b (soss-b1/nabp2 or soss-b2/nabp1), soss-a/ints3 and soss-c/inip. SOSS complexes containing soss-b1/nabp2 are more abundant than complexes containing soss-b2/nabp1.

The protein localises to the nucleus. Component of the SOSS complex, a multiprotein complex that functions downstream of the MRN complex to promote DNA repair and G2/M checkpoint. In the SOSS complex, acts as a sensor of single-stranded DNA that binds to single-stranded DNA. The SOSS complex associates with DNA lesions and influences diverse endpoints in the cellular DNA damage response including cell-cycle checkpoint activation, recombinational repair and maintenance of genomic stability. Required for efficient homologous recombination-dependent repair of double-strand breaks (DSBs). The chain is SOSS complex subunit B1 (nabp2) from Xenopus tropicalis (Western clawed frog).